The following is a 918-amino-acid chain: Aconitase-ribosomal protein bL21m fusion protein (918 aa).

Residues 1–30 (MATFARMKLCLSGSSQAIPSKGISLVAARF) constitute a mitochondrion transit peptide. Residues 31–811 (QSTASRASYV…IDSIKQQPDH (781 aa)) are homocitrate dehydratase, mitochondrial. Substrate-binding positions include glutamine 105 and 198-200 (DSH). Cysteine 394, cysteine 457, and cysteine 460 together coordinate [4Fe-4S] cluster. Residues arginine 484, arginine 489, lysine 619, and 680 to 681 (AR) contribute to the substrate site. Positions 812–918 (YADAYIFNRH…ILRVTELKLN (107 aa)) are large ribosomal subunit protein bL21m.

It in the N-terminal section; belongs to the aconitase/IPM isomerase family. The protein in the C-terminal section; belongs to the bacterial ribosomal protein bL21 family. As to quaternary structure, component of the mitochondrial large ribosomal subunit (mt-LSU). Mature yeast 74S mitochondrial ribosomes consist of a small (37S) and a large (54S) subunit. The 37S small subunit contains a 15S ribosomal RNA (15S mt-rRNA) and at least 32 different proteins. The 54S large subunit contains a 21S rRNA (21S mt-rRNA) and at least 45 different proteins. It depends on [4Fe-4S] cluster as a cofactor.

Its subcellular location is the mitochondrion. It localises to the nucleus. It catalyses the reaction (2R)-homocitrate = cis-homoaconitate + H2O. It participates in amino-acid biosynthesis; L-lysine biosynthesis via AAA pathway; L-alpha-aminoadipate from 2-oxoglutarate: step 2/5. Its function is as follows. Catalyzes the reversible dehydration of (R)-homocitrate to cis-homoaconitate, a step in the alpha-aminoadipate pathway for lysine biosynthesis. Component of the mitochondrial ribosome (mitoribosome), a dedicated translation machinery responsible for the synthesis of mitochondrial genome-encoded proteins, including at least some of the essential transmembrane subunits of the mitochondrial respiratory chain. The mitoribosomes are attached to the mitochondrial inner membrane and translation products are cotranslationally integrated into the membrane. The protein is Aconitase-ribosomal protein bL21m fusion protein (aco2) of Schizosaccharomyces pombe (strain 972 / ATCC 24843) (Fission yeast).